Here is a 267-residue protein sequence, read N- to C-terminus: Imidazole glycerol phosphate synthase subunit HisF (267 aa).

Active-site residues include aspartate 22 and aspartate 141.

The protein belongs to the HisA/HisF family. As to quaternary structure, heterodimer of HisH and HisF.

Its subcellular location is the cytoplasm. It catalyses the reaction 5-[(5-phospho-1-deoxy-D-ribulos-1-ylimino)methylamino]-1-(5-phospho-beta-D-ribosyl)imidazole-4-carboxamide + L-glutamine = D-erythro-1-(imidazol-4-yl)glycerol 3-phosphate + 5-amino-1-(5-phospho-beta-D-ribosyl)imidazole-4-carboxamide + L-glutamate + H(+). It participates in amino-acid biosynthesis; L-histidine biosynthesis; L-histidine from 5-phospho-alpha-D-ribose 1-diphosphate: step 5/9. Functionally, IGPS catalyzes the conversion of PRFAR and glutamine to IGP, AICAR and glutamate. The HisF subunit catalyzes the cyclization activity that produces IGP and AICAR from PRFAR using the ammonia provided by the HisH subunit. In Mycobacterium tuberculosis (strain ATCC 25177 / H37Ra), this protein is Imidazole glycerol phosphate synthase subunit HisF.